An 89-amino-acid polypeptide reads, in one-letter code: Co-chaperonin GroES (89 aa).

It belongs to the GroES chaperonin family. In terms of assembly, heptamer of 7 subunits arranged in a ring. Interacts with the chaperonin GroEL.

It is found in the cytoplasm. Together with the chaperonin GroEL, plays an essential role in assisting protein folding. The GroEL-GroES system forms a nano-cage that allows encapsulation of the non-native substrate proteins and provides a physical environment optimized to promote and accelerate protein folding. GroES binds to the apical surface of the GroEL ring, thereby capping the opening of the GroEL channel. The chain is Co-chaperonin GroES from Pseudothermotoga lettingae (strain ATCC BAA-301 / DSM 14385 / NBRC 107922 / TMO) (Thermotoga lettingae).